A 472-amino-acid polypeptide reads, in one-letter code: RING-H2 finger protein ATL13 (472 aa).

Residues isoleucine 51 to leucine 71 traverse the membrane as a helical segment. The RING-type; atypical zinc finger occupies cysteine 134 to arginine 176. A disordered region spans residues valine 320–serine 340.

This sequence belongs to the RING-type zinc finger family. ATL subfamily.

The protein localises to the membrane. The catalysed reaction is S-ubiquitinyl-[E2 ubiquitin-conjugating enzyme]-L-cysteine + [acceptor protein]-L-lysine = [E2 ubiquitin-conjugating enzyme]-L-cysteine + N(6)-ubiquitinyl-[acceptor protein]-L-lysine.. It participates in protein modification; protein ubiquitination. This Arabidopsis thaliana (Mouse-ear cress) protein is RING-H2 finger protein ATL13 (ATL13).